Here is a 433-residue protein sequence, read N- to C-terminus: O-methyltransferase aclM (433 aa).

Residues 5 to 37 (LTDAERTALQTSLEALNRQVEATRNILRSNSQK) adopt a coiled-coil conformation. S-adenosyl-L-methionine is bound by residues Asp-277 and 311 to 313 (GDF). His-330 (proton acceptor) is an active-site residue.

It belongs to the class I-like SAM-binding methyltransferase superfamily. Cation-independent O-methyltransferase family. COMT subfamily.

Its pathway is mycotoxin biosynthesis. O-methyltransferase; part of the gene cluster that mediates the biosynthesis of aspirochlorine (or antibiotic A30641), an unusual halogenated spiro compound with distinctive antifungal properties due to selective inhibition of protein biosynthesis, and which is also active against bacteria, viruses, and murine tumor cells. The non-ribosomal peptide synthetase (NRPS) aclP is responsible the formation of the diketopiperazine (DKP) core from the condensation of 2 phenylalanine residues. One Phe residue is tailored into chlorotyrosine by hydroxylation and chlorination, whereas the second Phe undergoes an unprecedented C-C bond cleavage to be converted into glycine. After formation of the DKP, sulfur is incorporated into the DKP by conjugation with glutathione by aclG, followed by its stepwise degradation to the thiol by aclI, aclJ and aclK, and the dithiol oxidation by aclT. In addition, oxygenases (aclB, aclC, aclL and aclO) and O-methyltransferases (aclM and aclU) act as tailoring enzymes to produce the intermediate dechloroaspirochlorine. Ultimately, chlorination of dechloroaspirochlorine by the halogenase aclH is the last step in the aspirochlorine pathway. The chain is O-methyltransferase aclM from Aspergillus oryzae (strain ATCC 42149 / RIB 40) (Yellow koji mold).